The primary structure comprises 732 residues: Polyribonucleotide nucleotidyltransferase (732 aa).

Aspartate 515 and aspartate 521 together coordinate Mg(2+). The KH domain occupies 581-641; sequence PKLELFNVDP…KNVDAAKDYI (61 aa). Residues 672–731 enclose the S1 motif domain; sequence GDEFTGSVKSVVDFGVFIELKDGVDGLLHISKIKSPLNVGDQVKVCVSEQKGNKISLSLV.

Belongs to the polyribonucleotide nucleotidyltransferase family. It depends on Mg(2+) as a cofactor.

The protein resides in the cytoplasm. It carries out the reaction RNA(n+1) + phosphate = RNA(n) + a ribonucleoside 5'-diphosphate. Involved in mRNA degradation. Catalyzes the phosphorolysis of single-stranded polyribonucleotides processively in the 3'- to 5'-direction. This is Polyribonucleotide nucleotidyltransferase from Campylobacter concisus (strain 13826).